The following is a 112-amino-acid chain: Protein lin-52 homolog (112 aa).

It belongs to the lin-52 family. In terms of assembly, component of the DREAM complex.

The sequence is that of Protein lin-52 homolog (LIN52) from Gallus gallus (Chicken).